The primary structure comprises 276 residues: Large ribosomal subunit protein uL2 (276 aa).

The segment at 225–276 is disordered; sequence VMNPVDHPHGGGEGKTAAGRDPVSPWGTPTKGYRTRSNKRTDSMIVQKRHKR.

Belongs to the universal ribosomal protein uL2 family. Part of the 50S ribosomal subunit. Forms a bridge to the 30S subunit in the 70S ribosome.

Its function is as follows. One of the primary rRNA binding proteins. Required for association of the 30S and 50S subunits to form the 70S ribosome, for tRNA binding and peptide bond formation. It has been suggested to have peptidyltransferase activity; this is somewhat controversial. Makes several contacts with the 16S rRNA in the 70S ribosome. This is Large ribosomal subunit protein uL2 from Cupriavidus taiwanensis (strain DSM 17343 / BCRC 17206 / CCUG 44338 / CIP 107171 / LMG 19424 / R1) (Ralstonia taiwanensis (strain LMG 19424)).